Here is a 309-residue protein sequence, read N- to C-terminus: Spermatid maturation protein 1 (309 aa).

The helical transmembrane segment at 29–49 threads the bilayer; the sequence is VLLLLGLIICINISINIVTLL. The disordered stretch occupies residues 209–231; it reads PPPPSPEAPSHKNGGEGAVPEAE. Residues 259–285 are a coiled coil; it reads RIVYDARDMRRRLRELTREVEALSGCY.

It localises to the membrane. It is found in the cytoplasm. In terms of biological role, required for proper cytoplasm removal during spermatogenesis. This is Spermatid maturation protein 1 (SPEM1) from Homo sapiens (Human).